We begin with the raw amino-acid sequence, 285 residues long: MDGVLLLNKPKGMTSHDCVAKVRRLLGVKKAGHTGTLDPNVSGVLPICLGKATRIAEFLTGTTKTYEGKVTLGAATTTEDADGDIIAARPVDRPIARAEIEAVFDSLTGEIEQTPPMYSAVKVGGKKLYEYARAGIEVERPTRRVTIYELELLDEREQFFGETVSFRFRVTCSKGTYVRTLAVMIGERLGYPAHMSDLIRTASGPFRLEDCVTFEDVERRAADGTADALLIPIERALFHLPKYEINDKVAEKVKNGALLRLPAFLEKLTGRSCLFRPSGKRWPCT.

The active-site Nucleophile is Asp-38.

Belongs to the pseudouridine synthase TruB family. Type 1 subfamily.

It carries out the reaction uridine(55) in tRNA = pseudouridine(55) in tRNA. Functionally, responsible for synthesis of pseudouridine from uracil-55 in the psi GC loop of transfer RNAs. The polypeptide is tRNA pseudouridine synthase B (Geobacillus kaustophilus (strain HTA426)).